The chain runs to 337 residues: Putative [LysW]-lysine/[LysW]-ornithine hydrolase (337 aa).

H67 provides a ligand contact to Zn(2+). D69 is a catalytic residue. D91 contributes to the Zn(2+) binding site. The active-site Proton acceptor is E118. Residues E119, E140, and H298 each coordinate Zn(2+).

This sequence belongs to the peptidase M20A family. LysK subfamily. Requires Zn(2+) as cofactor. Co(2+) is required as a cofactor.

The protein resides in the cytoplasm. The catalysed reaction is [amino-group carrier protein]-C-terminal-gamma-(L-lysyl)-L-glutamate + H2O = [amino-group carrier protein]-C-terminal-L-glutamate + L-lysine. It catalyses the reaction [amino-group carrier protein]-C-terminal-gamma-(L-ornithyl)-L-glutamate + H2O = [amino-group carrier protein]-C-terminal-L-glutamate + L-ornithine. It participates in amino-acid biosynthesis; L-lysine biosynthesis via AAA pathway; L-lysine from L-alpha-aminoadipate (Thermus route): step 5/5. The protein operates within amino-acid biosynthesis; L-arginine biosynthesis. In terms of biological role, catalyzes the release of L-lysine from [LysW]-gamma-L-lysine and the release of L-ornithine from [LysW]-L-ornithine. This chain is Putative [LysW]-lysine/[LysW]-ornithine hydrolase, found in Pyrococcus abyssi (strain GE5 / Orsay).